Reading from the N-terminus, the 252-residue chain is Origin recognition complex subunit 6 (252 aa).

Positions 188–232 (REPGDVATPPRKRKKIVVEAPAKEMEKVEEMPHKPQKDEDLTQDY) are disordered. At Thr-195 the chain carries Phosphothreonine. Basic and acidic residues predominate over residues 208–232 (PAKEMEKVEEMPHKPQKDEDLTQDY). A Glycyl lysine isopeptide (Lys-Gly) (interchain with G-Cter in SUMO2) cross-link involves residue Lys-210. Thr-229 bears the Phosphothreonine mark.

This sequence belongs to the ORC6 family. As to quaternary structure, component of ORC, a complex composed of at least 6 subunits: ORC1, ORC2, ORC3, ORC4, ORC5 and ORC6. ORC is regulated in a cell-cycle dependent manner. It is sequentially assembled at the exit from anaphase of mitosis and disassembled as cells enter S phase. Interacts with DBF4.

It localises to the nucleus. Component of the origin recognition complex (ORC) that binds origins of replication. DNA-binding is ATP-dependent. The specific DNA sequences that define origins of replication have not been identified yet. ORC is required to assemble the pre-replication complex necessary to initiate DNA replication. Does not bind histone H3 and H4 trimethylation marks H3K9me3, H3K27me3 and H4K20me3. This is Origin recognition complex subunit 6 (ORC6) from Homo sapiens (Human).